Reading from the N-terminus, the 495-residue chain is Internal alternative NAD(P)H-ubiquinone oxidoreductase A1, mitochondrial (495 aa).

The N-terminal 41 residues, Met-1–Gln-41, are a transit peptide targeting the mitochondrion. Arg-61–Arg-91 is a binding site for FAD. Leu-228–Tyr-264 serves as a coordination point for NAD(+). A Microbody targeting signal motif is present at residues Leu-486–Ile-495.

It belongs to the NADH dehydrogenase family. The cofactor is FAD.

The protein localises to the mitochondrion inner membrane. It is found in the peroxisome. The catalysed reaction is a quinone + NADH + H(+) = a quinol + NAD(+). It carries out the reaction a ubiquinone + NADH + H(+) = a ubiquinol + NAD(+). Its function is as follows. Alternative NADH-ubiquinone oxidoreductase which catalyzes the oxidation of mitochondrial NADH does not translocate protons across the inner mitochondrial membrane. The chain is Internal alternative NAD(P)H-ubiquinone oxidoreductase A1, mitochondrial (NDA1) from Solanum tuberosum (Potato).